Consider the following 182-residue polypeptide: uncharacterized protein (182 aa).

Disordered regions lie at residues 1–49 and 126–171; these read MAAP…DGGS and QGGH…VHAQ. Residues 17–39 are compositionally biased toward basic and acidic residues; sequence ELLEKAARLERGPPPRGDPEAVG.

This is an uncharacterized protein from Homo sapiens (Human).